The chain runs to 296 residues: Small ribosomal subunit protein uS2 (296 aa).

The interval 245–296 (WEAPAAGFAGATGTGWDGAAGDEWGAAPATTEWAASAAPAAASGEAAKETTW) is disordered. Positions 263-289 (AAGDEWGAAPATTEWAASAAPAAASGE) are enriched in low complexity.

Belongs to the universal ribosomal protein uS2 family. As to quaternary structure, component of the small ribosomal subunit. Mature ribosomes consist of a small (40S) and a large (60S) subunit. The 40S subunit contains about 33 different proteins and 1 molecule of RNA (18S). The 60S subunit contains about 49 different proteins and 3 molecules of RNA (25S, 5.8S and 5S). Interacts with RPS21.

The protein resides in the cytoplasm. In terms of biological role, required for the assembly and/or stability of the 40S ribosomal subunit. Required for the processing of the 20S rRNA-precursor to mature 18S rRNA in a late step of the maturation of 40S ribosomal subunits. The protein is Small ribosomal subunit protein uS2 of Fusarium vanettenii (strain ATCC MYA-4622 / CBS 123669 / FGSC 9596 / NRRL 45880 / 77-13-4) (Fusarium solani subsp. pisi).